A 260-amino-acid polypeptide reads, in one-letter code: Sperm microtubule inner protein 6 (260 aa).

Belongs to the SPMIP6 family. As to quaternary structure, microtubule inner protein component of sperm flagellar doublet microtubules. Interacts with alpha-tubulin. In terms of tissue distribution, testis-specific, expressed exclusively in germ cells (at protein level). Testis-specific. As to expression, expressed in both lung and testis.

It is found in the cytoplasm. The protein localises to the cytoskeleton. Its subcellular location is the nucleus. It localises to the mitochondrion. The protein resides in the flagellum axoneme. Its function is as follows. May participate in intramanchette transport and midpiece formation of the sperm tail. May play a potential role in somatic cell proliferation. In Mus musculus (Mouse), this protein is Sperm microtubule inner protein 6 (SPMIP6).